Reading from the N-terminus, the 44-residue chain is KAKCADIDQPCKTSCDCCETKGACTCYKSGCVCRMGSFXATCKK.

5 disulfide bridges follow: cysteine 4-cysteine 18, cysteine 11-cysteine 24, cysteine 15-cysteine 42, cysteine 17-cysteine 33, and cysteine 26-cysteine 31.

As to expression, expressed by the venom gland.

It is found in the secreted. Functionally, neurotoxin. Causes spastic paralysis and death in mice within 10 minutes at dose levels of 3 ug per mouse. This chain is U4-ctenitoxin-Pk1a, found in Phoneutria keyserlingi (Brazilian wandering spider).